The primary structure comprises 252 residues: Ribonuclease HII (252 aa).

One can recognise an RNase H type-2 domain in the interval 41 to 232; that stretch reads LLVAGVDEAG…VRLALEGREQ (192 aa). A divalent metal cation is bound by residues D47, E48, and D140.

The protein belongs to the RNase HII family. Requires Mn(2+) as cofactor. Mg(2+) serves as cofactor.

The protein localises to the cytoplasm. It catalyses the reaction Endonucleolytic cleavage to 5'-phosphomonoester.. In terms of biological role, endonuclease that specifically degrades the RNA of RNA-DNA hybrids. This is Ribonuclease HII from Xanthomonas oryzae pv. oryzae (strain KACC10331 / KXO85).